The chain runs to 525 residues: Phosphoenolpyruvate carboxykinase (ATP) (525 aa).

Residues arginine 52, tyrosine 186, and lysine 192 each coordinate substrate. ATP is bound by residues lysine 192, histidine 211, and 228 to 236; that span reads GLSGTGKTT. 2 residues coordinate Mn(2+): lysine 192 and histidine 211. Aspartate 249 provides a ligand contact to Mn(2+). ATP is bound by residues glutamate 277, arginine 314, 433–434, and threonine 439; that span reads RI. Substrate is bound at residue arginine 314.

The protein belongs to the phosphoenolpyruvate carboxykinase (ATP) family. Requires Mn(2+) as cofactor.

Its subcellular location is the cytoplasm. The catalysed reaction is oxaloacetate + ATP = phosphoenolpyruvate + ADP + CO2. The protein operates within carbohydrate biosynthesis; gluconeogenesis. Functionally, involved in the gluconeogenesis. Catalyzes the conversion of oxaloacetate (OAA) to phosphoenolpyruvate (PEP) through direct phosphoryl transfer between the nucleoside triphosphate and OAA. The protein is Phosphoenolpyruvate carboxykinase (ATP) of Fusobacterium nucleatum subsp. nucleatum (strain ATCC 25586 / DSM 15643 / BCRC 10681 / CIP 101130 / JCM 8532 / KCTC 2640 / LMG 13131 / VPI 4355).